A 319-amino-acid polypeptide reads, in one-letter code: MAICPELAQTDKSALANLSDETETLKNSTDEVQTSSSFSSSGGRQSSPLTSGSKLEREKQTPSLEQGDTQSELLDYKNYEKKLSKKWINYLKLKDSNFERHQPDTKLPTEITRVSDEELNALQSYCTMKINLIHRRGDSKKKTSSRHKKLHLGLDVEASERDAFSCTVPDELLNRIYFKNMRTTPKQEAAAKQHISYQCPYCNRKRAELALSAFLKQKKTLLESFLLQERIDEHLHTKDFLTRIGEAHQDFPRLSDDPRIIWKRLTEKSHIRYSGFERSETEQKLQRDGNSACHLPFSLPFLKRLTLIKPELVIVNDNV.

A disordered region spans residues 21 to 70 (ETETLKNSTDEVQTSSSFSSSGGRQSSPLTSGSKLEREKQTPSLEQGDTQ). Residues 25–34 (LKNSTDEVQT) show a composition bias toward polar residues. The span at 35-51 (SSSFSSSGGRQSSPLTS) shows a compositional bias: low complexity. The segment covering 61 to 70 (TPSLEQGDTQ) has biased composition (polar residues).

This is an uncharacterized protein from Homo sapiens (Human).